The following is a 415-amino-acid chain: Actin-like protein 7B (415 aa).

Positions 1–35 (MATRNSPMALGTAQGDPGEAGTRPGSDAGLRDTGA) are disordered. At Ser-6 the chain carries Phosphoserine.

This sequence belongs to the actin family.

It is found in the cytoplasm. It localises to the cytoskeleton. This chain is Actin-like protein 7B (ACTL7B), found in Macaca fascicularis (Crab-eating macaque).